A 370-amino-acid polypeptide reads, in one-letter code: Proline-rich protein 5-like (370 aa).

Serine 28 is modified (phosphoserine). Disordered stretches follow at residues 312–346 and 351–370; these read LGEEAGGEDKHLLLPPSFPPPHRQCSSEPSILDSP and LEDVASGSQEDSELNCASLS.

Belongs to the PROTOR family. Interacts with the mammalian target of rapamycin complex 2 (mTORC2) which contains MTOR, MLST8, PRR5, RICTOR, MAPKAP1 and DEPTOR. Interacts with RFFL. Interacts (via C-terminus) with ZFP36 (via C-terminus); this interaction may accelerate ZFP36-mediated mRNA decay during stress. Interacts with RICTOR. In terms of processing, ubiquitinated. Ubiquitination by RFFL promotes proteasomal degradation of PRR5L thereby modifying the substrate-specific activity of the mTORC2 complex. Ubiquitination by RFFL is stimulated by LPA/lysophosphatidic acid.

Functionally, associates with the mTORC2 complex that regulates cellular processes including survival and organization of the cytoskeleton. Regulates the activity of the mTORC2 complex in a substrate-specific manner preventing for instance the specific phosphorylation of PKCs and thereby controlling cell migration. Plays a role in the stimulation of ZFP36-mediated mRNA decay of several ZFP36-associated mRNAs, such as TNF-alpha and GM-CSF, in response to stress. Required for ZFP36 localization to cytoplasmic stress granule (SG) and P-body (PB) in response to stress. The chain is Proline-rich protein 5-like (Prr5l) from Mus musculus (Mouse).